Reading from the N-terminus, the 295-residue chain is Phosphatidylglycerol--prolipoprotein diacylglyceryl transferase (295 aa).

The next 4 helical transmembrane spans lie at 28-48, 69-89, 101-121, and 131-151; these read WYALAYIAGIVIAWRLAVLAT, LLTWIILGVILGGRLGFVLFY, ILMVWQGGMAFHGGLLGVVIA, and IPKLSLADLITHTVAPGLLLG. R152 is an a 1,2-diacyl-sn-glycero-3-phospho-(1'-sn-glycerol) binding site. A run of 3 helical transmembrane segments spans residues 195–215, 224–244, and 268–288; these read QLYEAALEGLLLGTLLLWLVW, GLITGVFLAGYGLSRFVVEFF, and GLTMGQLLSLPMIALGLWFVL.

The protein belongs to the Lgt family.

The protein resides in the cell inner membrane. It catalyses the reaction L-cysteinyl-[prolipoprotein] + a 1,2-diacyl-sn-glycero-3-phospho-(1'-sn-glycerol) = an S-1,2-diacyl-sn-glyceryl-L-cysteinyl-[prolipoprotein] + sn-glycerol 1-phosphate + H(+). It participates in protein modification; lipoprotein biosynthesis (diacylglyceryl transfer). Its function is as follows. Catalyzes the transfer of the diacylglyceryl group from phosphatidylglycerol to the sulfhydryl group of the N-terminal cysteine of a prolipoprotein, the first step in the formation of mature lipoproteins. The protein is Phosphatidylglycerol--prolipoprotein diacylglyceryl transferase of Ruegeria pomeroyi (strain ATCC 700808 / DSM 15171 / DSS-3) (Silicibacter pomeroyi).